A 270-amino-acid chain; its full sequence is uncharacterized protein (270 aa).

An HTH lysR-type domain is found at 1-50 (LTEVVKAQSFTKAAENLYTSQPSISRDIKRLENDYDVKVFEFKHSKMTLT). A DNA-binding region (H-T-H motif) is located at residues 10–29 (FTKAAENLYTSQPSISRDIK).

It belongs to the LysR transcriptional regulatory family.

This is an uncharacterized protein from Staphylococcus xylosus.